A 119-amino-acid chain; its full sequence is Large ribosomal subunit protein uL18 (119 aa).

It belongs to the universal ribosomal protein uL18 family. Part of the 50S ribosomal subunit; part of the 5S rRNA/L5/L18/L25 subcomplex. Contacts the 5S and 23S rRNAs.

Its function is as follows. This is one of the proteins that bind and probably mediate the attachment of the 5S RNA into the large ribosomal subunit, where it forms part of the central protuberance. The chain is Large ribosomal subunit protein uL18 from Cupriavidus metallidurans (strain ATCC 43123 / DSM 2839 / NBRC 102507 / CH34) (Ralstonia metallidurans).